Consider the following 149-residue polypeptide: Down syndrome critical region protein 9 (149 aa).

The segment at 1–41 is disordered; that stretch reads MGRICPVNSRARRLRARPGRPSGDSLPYHQLQGGAPRLWSP.

Testis specific.

The polypeptide is Down syndrome critical region protein 9 (DSCR9) (Homo sapiens (Human)).